Here is a 215-residue protein sequence, read N- to C-terminus: Large ribosomal subunit protein uL3 (215 aa).

Residues 136-155 (GVSISHRSHGSTGQRQDPGK) are disordered. N5-methylglutamine is present on Gln-151.

It belongs to the universal ribosomal protein uL3 family. In terms of assembly, part of the 50S ribosomal subunit. Forms a cluster with proteins L14 and L19. In terms of processing, methylated by PrmB.

Its function is as follows. One of the primary rRNA binding proteins, it binds directly near the 3'-end of the 23S rRNA, where it nucleates assembly of the 50S subunit. The sequence is that of Large ribosomal subunit protein uL3 from Rickettsia typhi (strain ATCC VR-144 / Wilmington).